The chain runs to 278 residues: Dermonecrotic toxin LlSicTox-alphaIII3iii (278 aa).

The active site involves His5. Residues Glu25 and Asp27 each contribute to the Mg(2+) site. His40 acts as the Nucleophile in catalysis. Residues Cys44 and Cys50 are joined by a disulfide bond. Mg(2+) is bound at residue Asp84.

It belongs to the arthropod phospholipase D family. Class I subfamily. It depends on Mg(2+) as a cofactor. As to expression, expressed by the venom gland.

Its subcellular location is the secreted. The enzyme catalyses an N-(acyl)-sphingosylphosphocholine = an N-(acyl)-sphingosyl-1,3-cyclic phosphate + choline. It catalyses the reaction an N-(acyl)-sphingosylphosphoethanolamine = an N-(acyl)-sphingosyl-1,3-cyclic phosphate + ethanolamine. It carries out the reaction a 1-acyl-sn-glycero-3-phosphocholine = a 1-acyl-sn-glycero-2,3-cyclic phosphate + choline. The catalysed reaction is a 1-acyl-sn-glycero-3-phosphoethanolamine = a 1-acyl-sn-glycero-2,3-cyclic phosphate + ethanolamine. Functionally, dermonecrotic toxins cleave the phosphodiester linkage between the phosphate and headgroup of certain phospholipids (sphingolipid and lysolipid substrates), forming an alcohol (often choline) and a cyclic phosphate. This toxin acts on sphingomyelin (SM). It may also act on ceramide phosphoethanolamine (CPE), lysophosphatidylcholine (LPC) and lysophosphatidylethanolamine (LPE), but not on lysophosphatidylserine (LPS), and lysophosphatidylglycerol (LPG). It acts by transphosphatidylation, releasing exclusively cyclic phosphate products as second products. Induces dermonecrosis, hemolysis, increased vascular permeability, edema, inflammatory response, and platelet aggregation. This is Dermonecrotic toxin LlSicTox-alphaIII3iii from Loxosceles laeta (South American recluse spider).